We begin with the raw amino-acid sequence, 114 residues long: Non-specific lipid-transfer protein 1 (114 aa).

Positions 1–23 (MEMVSKIACFVLLCMVVVAPHAE) are cleaved as a signal peptide. 4 cysteine pairs are disulfide-bonded: cysteine 27-cysteine 73, cysteine 37-cysteine 50, cysteine 51-cysteine 96, and cysteine 71-cysteine 110.

The protein belongs to the plant LTP family.

In terms of biological role, plant non-specific lipid-transfer proteins transfer phospholipids as well as galactolipids across membranes. May play a role in wax or cutin deposition in the cell walls of expanding epidermal cells and certain secretory tissues. The sequence is that of Non-specific lipid-transfer protein 1 (LTP1) from Solanum pennellii (Tomato).